We begin with the raw amino-acid sequence, 470 residues long: 3-isopropylmalate dehydratase large subunit (470 aa).

Residues C349, C409, and C412 each coordinate [4Fe-4S] cluster.

The protein belongs to the aconitase/IPM isomerase family. LeuC type 1 subfamily. As to quaternary structure, heterodimer of LeuC and LeuD. It depends on [4Fe-4S] cluster as a cofactor.

The enzyme catalyses (2R,3S)-3-isopropylmalate = (2S)-2-isopropylmalate. It participates in amino-acid biosynthesis; L-leucine biosynthesis; L-leucine from 3-methyl-2-oxobutanoate: step 2/4. Catalyzes the isomerization between 2-isopropylmalate and 3-isopropylmalate, via the formation of 2-isopropylmaleate. The chain is 3-isopropylmalate dehydratase large subunit from Afipia carboxidovorans (strain ATCC 49405 / DSM 1227 / KCTC 32145 / OM5) (Oligotropha carboxidovorans).